A 440-amino-acid chain; its full sequence is MERDIYLIGLNHRTAGVEVRERFALTDCNVLEQGVVPIDDVVSEVLILSTCNRVEILAVGRGPEVVSRVLRGWAAARGQCEHDLAPYVYTHKGHEAVRHLFRVASSLDSMVVGEPQILGQLKDAYRKAIERNCTRVILNRLLHKAFSVAKRVRTETGVASSAVSISYAAVELAKRIFGEMNQYKAMLIGAGEMAELAATHLLHAGISKIYVANRTFERGRELARQFNGEAIHFEDLFERLADADIIISSTGAHEAIIRARDIKDVLRRRKHRPMFFIDIAVPRDIDPDVNNLDNVYLYDIDDLKEVVEENLAQRREEASKALTIVEEETGKFGQWLRSLELQPTIVDLIRRSERIAQDELARTLKRLGPVDDETRDALEAMLSSMVRKLNHEPITFLKRRHSEEDAGPRYIDIARRMFNLDDDNVPPDAHCDRRRHDEDN.

Substrate contacts are provided by residues T50–R53, S109, E114–Q116, and Q120. The active-site Nucleophile is the C51. G189 to A194 is a binding site for NADP(+).

The protein belongs to the glutamyl-tRNA reductase family. As to quaternary structure, homodimer.

The enzyme catalyses (S)-4-amino-5-oxopentanoate + tRNA(Glu) + NADP(+) = L-glutamyl-tRNA(Glu) + NADPH + H(+). The protein operates within porphyrin-containing compound metabolism; protoporphyrin-IX biosynthesis; 5-aminolevulinate from L-glutamyl-tRNA(Glu): step 1/2. Its function is as follows. Catalyzes the NADPH-dependent reduction of glutamyl-tRNA(Glu) to glutamate 1-semialdehyde (GSA). This chain is Glutamyl-tRNA reductase, found in Nitratidesulfovibrio vulgaris (strain DP4) (Desulfovibrio vulgaris).